A 267-amino-acid polypeptide reads, in one-letter code: MGKLMAPKILVTNDDGVYSTGLKAAFDSVSDLGEVTISAPAVQQSGVGRSISIFEPLRITKTDVGGIPAYAVGGTPTDSVILGIFTILKQMPDLVLSGFNIGENISTDTITTSGTIGGALEAASYGIPAIAASMQVLDEGQKFDDPRDYHRERFEAGIKIVNKIARNVLRHGMPENVDLLNINIPYHAEEDTPIEITRLARKVFKTDVEERRDPRGRSYYWIAGDLIREEEEGTDVHAVMQKGYVSITPISLDSTARIEFSEIEKYL.

4 residues coordinate a divalent metal cation: Asp14, Asp15, Ser45, and Asn100.

This sequence belongs to the SurE nucleotidase family. The cofactor is a divalent metal cation.

The protein resides in the cytoplasm. The enzyme catalyses a ribonucleoside 5'-phosphate + H2O = a ribonucleoside + phosphate. Functionally, nucleotidase that shows phosphatase activity on nucleoside 5'-monophosphates. This Methanosarcina acetivorans (strain ATCC 35395 / DSM 2834 / JCM 12185 / C2A) protein is 5'-nucleotidase SurE.